A 1447-amino-acid chain; its full sequence is Netrin receptor DCC (1447 aa).

The first 25 residues, 1–25 (MENSLGCVWVPKLAFVLFGASLLSA), serve as a signal peptide directing secretion. The Extracellular segment spans residues 26–1097 (HLQVTGFQIK…GSVTPQKNSN (1072 aa)). 4 Ig-like C2-type domains span residues 36–135 (PFTS…AKVT), 139–229 (PLRF…AEVR), 234–326 (PGLH…AELT), and 331–416 (PWFL…AQLI). 2 N-linked (GlcNAc...) asparagine glycosylation sites follow: asparagine 60 and asparagine 94. Disulfide bonds link cysteine 61/cysteine 117, cysteine 161/cysteine 212, and cysteine 261/cysteine 310. N-linked (GlcNAc...) asparagine glycans are attached at residues asparagine 299 and asparagine 318. A disulfide bond links cysteine 352 and cysteine 400. 6 Fibronectin type-III domains span residues 431–524 (APRD…TQPE), 530–620 (PVEN…TLSD), 625–718 (PPQN…TPEN), 728–821 (QPSS…TDPT), 846–942 (PPVG…TYEA), and 947–1044 (APKD…TLKV). Residue asparagine 478 is glycosylated (N-linked (GlcNAc...) asparagine). 2 N-linked (GlcNAc...) asparagine glycosylation sites follow: asparagine 628 and asparagine 702. The helical transmembrane segment at 1098–1122 (LLVITVVTVGVLTVLVVVIVAVICT) threads the bilayer. Residues 1123–1447 (RRSSAQQRKK…QLNAITGSAF (325 aa)) are Cytoplasmic-facing. Disordered regions lie at residues 1126-1153 (SAQQRKKRATHSVSKRKGSQKDLRPPDL) and 1166-1220 (EKPT…MSTL). The segment covering 1129–1143 (QRKKRATHSVSKRKG) has biased composition (basic residues). Basic and acidic residues predominate over residues 1144-1153 (SQKDLRPPDL). Phosphoserine; by MAPK1 is present on serine 1178. Over residues 1179–1220 (PIQSCQDLTPVSHSQSETQMGSKSASHSGQDTEDAGSSMSTL) the composition is skewed to polar residues. Threonine 1187 is modified (phosphothreonine; by MAPK1). At serine 1267 the chain carries Phosphoserine; by MAPK1. Disordered stretches follow at residues 1291-1329 (RGFGAGRTQSVSEGPTTQQQPMLPPAQPEHPSSEEAPSR) and 1394-1419 (LLPVSVPTAPEVSEESHKPTEDPASV). Polar residues predominate over residues 1297–1311 (RTQSVSEGPTTQQQP).

Belongs to the immunoglobulin superfamily. DCC family. Interacts with the cytoplasmic part of UNC5A, UNC5B, UNC5C and probably UNC5D. Interacts with MAPK1. Interacts with NTN1. Interacts with DSCAM. Interacts with PTK2/FAK1. Interacts with MYO10. Interacts with CBLN4; this interaction can be competed by NTN1. Interacts with SIAH1 and SIAH2. In terms of processing, ubiquitinated; mediated by SIAH1 or SIAH2 and leading to its subsequent proteasomal degradation. In the embryo, expressed at high levels in the developing brain and neural tube. In the embryo, expressed in developing neurons of the telencephalic cortical plate and in developing brainstem nuclei. In adult, highly expressed in brain with very low levels found in testis, heart and thymus. Isoform C is expressed only in the embryo.

Its subcellular location is the membrane. In terms of biological role, receptor for netrin required for axon guidance. Mediates axon attraction of neuronal growth cones in the developing nervous system upon ligand binding. Its association with UNC5 proteins may trigger signaling for axon repulsion. It also acts as a dependence receptor required for apoptosis induction when not associated with netrin ligand. Implicated as a tumor suppressor gene. The protein is Netrin receptor DCC (Dcc) of Mus musculus (Mouse).